The sequence spans 354 residues: MSEPRRPAAFRIEPAPSPSPEATREDVRKPRAIRVDEAVKITPAEIDIFDSLETEASAPPPAAAPKRRSRLGAVFVAALGMLVSLAAGLWADSLIRDLFSRADWLGWLGAALVAVAALALFAIVVREAIAVARLASVERMRRRSDDAYERDDARQARAVIADLSSLLASHPDTAAGRRQLEQLEGDVIDGRDLLRIAEKELLAPLDKRAQKLVLDAAKRVSVVTAVSPRALMDVGYVIFEAVRLLRRLSELYCGRPGFFGFLRLSRNVLAHLAVTGSMAMGDTIVQQIVGHGIAARLSARLGEGVVNGMMTARIGMAAISAIRPLSFRAVERPGIGDFLKALTQFAAKTDGKRT.

The segment at 1-28 (MSEPRRPAAFRIEPAPSPSPEATREDVR) is disordered. A run of 2 helical transmembrane segments spans residues 71–91 (LGAV…GLWA) and 105–125 (LGWL…AIVV).

It belongs to the UPF0283 family.

It is found in the cell inner membrane. The polypeptide is UPF0283 membrane protein Meso_1416 (Chelativorans sp. (strain BNC1)).